The primary structure comprises 511 residues: Frizzled/smoothened-like sans CRD protein C (511 aa).

Positions 1 to 25 are cleaved as a signal peptide; that stretch reads MNQINKFIKNLYLIIITIILIIVIS. Residues 26 to 93 lie on the Extracellular side of the membrane; the sequence is NDNNGLFING…QWESYFEMSL (68 aa). N51 is a glycosylation site (N-linked (GlcNAc...) asparagine). Residues 94–114 traverse the membrane as a helical segment; that stretch reads IMGSISMFASLFLIITYSPLI. At 115–122 the chain is on the cytoplasmic side; sequence NKKHTRHT. A helical transmembrane segment spans residues 123–143; that stretch reads VGILCMSIGIFFVMVSDGRQL. Topologically, residues 144 to 172 are extracellular; sequence WDIESPGEYKKYCPDTGRYARQSDTKCLT. A helical membrane pass occupies residues 173-193; that stretch reads TGLFFQFGCVTAIGWWSILAV. The Cytoplasmic portion of the chain corresponds to 194–209; that stretch reads DLWMTIAKKVQTTKKQ. Residues 210–230 traverse the membrane as a helical segment; it reads LLYYLIGINTVSLILTFGPVV. The Extracellular segment spans residues 231 to 253; the sequence is KNQYGFGNAAIGCWMLDLKYQYG. A helical membrane pass occupies residues 254-274; the sequence is FFWIPVGICLSVGSVFIGLIF. Over 275-295 the chain is Cytoplasmic; the sequence is WEIYKISDAVKKRYLKKHIKP. A helical transmembrane segment spans residues 296–316; sequence LCLIVLMCLEFLYMFIYYSYI. Residues 317 to 357 lie on the Extracellular side of the membrane; sequence TANQPTYNKHVAEYIMCLIINAANVPGSYTCQLKTVSPTAQ. Residues 358–378 traverse the membrane as a helical segment; sequence FLFLIAIRLMGLQGLIFYGLT. Topologically, residues 379–511 are cytoplasmic; sequence AATKKVWANS…RVNSPDNLQP (133 aa). The segment at 430–511 is disordered; it reads NGYTTGGSDN…RVNSPDNLQP (82 aa). Residues 433 to 443 are compositionally biased toward gly residues; the sequence is TTGGSDNGVGS. Positions 451 to 460 are enriched in polar residues; sequence KSSSNGGAQD. A compositionally biased stretch (low complexity) spans 461 to 485; it reads NNNNNNNNNNNNNNNNNNNNNNNNN. A compositionally biased stretch (polar residues) spans 486–511; the sequence is SSSLEISGVESNNSTPRVNSPDNLQP.

This sequence belongs to the G-protein coupled receptor Fz/Smo family.

The protein resides in the membrane. The polypeptide is Frizzled/smoothened-like sans CRD protein C (fscC) (Dictyostelium discoideum (Social amoeba)).